We begin with the raw amino-acid sequence, 391 residues long: MSRFLICSFALVLLYPAGIDMYLVGLPRIAADLNASEAQLHIAFSVYLAGMAAAMLFAGKVADRSGRKPVAIPGAALFIIASVFCSLAETSTLFLAGRFLQGLGAGCCYVVAFAILRDTLDDRRRAKVLSLLNGITCIIPVLAPVLGHLIMLKFPWQSLFWTMATMGIAVLMLSLFILKETRPAAPTNSDKPRENSESLLNRFFLSRVVITTLSVSVILTFVNTSPVLLMEIMGFERGEYATIMALTAGVSMTVSFSTPFALGIFKPRTLMITSQVLFLAAGITLAVSPSHAVSLFGITLICAGFSVGFGVAMSQALGPFSLRAGVASSTLGIAQVCGSSLWIWLAAVVGIGAWNMLIGILIACSIVSLLLIMFVAPGRPVAAHEEIHHHA.

12 helical membrane passes run 4–24 (FLIC…MYLV), 42–62 (IAFS…GKVA), 69–89 (PVAI…SLAE), 93–113 (LFLA…VVAF), 131–151 (LLNG…HLIM), 158–178 (SLFW…LFIL), 203–222 (FFLS…LTFV), 245–265 (ALTA…LGIF), 269–289 (TLMI…AVSP), 293–313 (VSLF…GVAM), 331–351 (LGIA…VVGI), and 356–376 (MLIG…MFVA).

Belongs to the major facilitator superfamily. DHA1 family. MdtL (TC 2.A.1.2.22) subfamily.

The protein localises to the cell inner membrane. Functionally, confers resistance to chloramphenicol. This Escherichia coli O17:K52:H18 (strain UMN026 / ExPEC) protein is Multidrug resistance protein MdtL.